A 185-amino-acid polypeptide reads, in one-letter code: Ribosome-recycling factor (185 aa).

This sequence belongs to the RRF family.

The protein localises to the cytoplasm. Its function is as follows. Responsible for the release of ribosomes from messenger RNA at the termination of protein biosynthesis. May increase the efficiency of translation by recycling ribosomes from one round of translation to another. The sequence is that of Ribosome-recycling factor from Aromatoleum aromaticum (strain DSM 19018 / LMG 30748 / EbN1) (Azoarcus sp. (strain EbN1)).